A 273-amino-acid polypeptide reads, in one-letter code: Pantothenate synthetase (273 aa).

Position 27–34 (27–34) interacts with ATP; that stretch reads MGALHAGH. The active-site Proton donor is H34. (R)-pantoate is bound at residue Q58. Q58 provides a ligand contact to beta-alanine. 144–147 provides a ligand contact to ATP; the sequence is GKKD. A (R)-pantoate-binding site is contributed by Q150. Residues V173 and 181–184 contribute to the ATP site; that span reads LSSR.

This sequence belongs to the pantothenate synthetase family. Homodimer.

The protein resides in the cytoplasm. The enzyme catalyses (R)-pantoate + beta-alanine + ATP = (R)-pantothenate + AMP + diphosphate + H(+). Its pathway is cofactor biosynthesis; (R)-pantothenate biosynthesis; (R)-pantothenate from (R)-pantoate and beta-alanine: step 1/1. In terms of biological role, catalyzes the condensation of pantoate with beta-alanine in an ATP-dependent reaction via a pantoyl-adenylate intermediate. The sequence is that of Pantothenate synthetase from Campylobacter hominis (strain ATCC BAA-381 / DSM 21671 / CCUG 45161 / LMG 19568 / NCTC 13146 / CH001A).